Consider the following 222-residue polypeptide: CCA-adding enzyme (222 aa).

S50 and K53 together coordinate ATP. Residues S50 and K53 each coordinate CTP. Mg(2+) is bound by residues D61, D63, and D112. ATP contacts are provided by H135, K155, and Y164. CTP-binding residues include H135, K155, and Y164.

This sequence belongs to the tRNA nucleotidyltransferase/poly(A) polymerase family. Archaeal CCA-adding enzyme subfamily. As to quaternary structure, homodimer. Mg(2+) is required as a cofactor.

The catalysed reaction is a tRNA precursor + 2 CTP + ATP = a tRNA with a 3' CCA end + 3 diphosphate. It catalyses the reaction a tRNA with a 3' CCA end + 2 CTP + ATP = a tRNA with a 3' CCACCA end + 3 diphosphate. In terms of biological role, catalyzes the addition and repair of the essential 3'-terminal CCA sequence in tRNAs without using a nucleic acid template. Adds these three nucleotides in the order of C, C, and A to the tRNA nucleotide-73, using CTP and ATP as substrates and producing inorganic pyrophosphate. tRNA 3'-terminal CCA addition is required both for tRNA processing and repair. Also involved in tRNA surveillance by mediating tandem CCA addition to generate a CCACCA at the 3' terminus of unstable tRNAs. While stable tRNAs receive only 3'-terminal CCA, unstable tRNAs are marked with CCACCA and rapidly degraded. The protein is CCA-adding enzyme of Thermoplasma acidophilum.